The primary structure comprises 380 residues: Probable inactive dehydrogenase easA (380 aa).

FMN is bound by residues 25–27, alanine 60, glutamine 102, and histidine 171; that span reads PMT. Histidine 171 and asparagine 174 together coordinate substrate. FMN-binding positions include lysine 223, glycine 299, 324-325, and arginine 325; that span reads GR. A substrate-binding site is contributed by tyrosine 352.

Belongs to the NADH:flavin oxidoreductase/NADH oxidase family.

In terms of biological role, probable inactive dehydrogenase; part of the gene cluster that mediates the biosynthesis of fungal ergot alkaloid. DmaW catalyzes the first step of ergot alkaloid biosynthesis by condensing dimethylallyl diphosphate (DMAP) and tryptophan to form 4-dimethylallyl-L-tryptophan. The second step is catalyzed by the methyltransferase easF that methylates 4-dimethylallyl-L-tryptophan in the presence of S-adenosyl-L-methionine, resulting in the formation of 4-dimethylallyl-L-abrine. The catalase easC and the FAD-dependent oxidoreductase easE then transform 4-dimethylallyl-L-abrine to chanoclavine-I which is further oxidized by easD in the presence of NAD(+), resulting in the formation of chanoclavine-I aldehyde. Agroclavine dehydrogenase easG then mediates the conversion of chanoclavine-I aldehyde to agroclavine via a non-enzymatic adduct reaction: the substrate is an iminium intermediate that is formed spontaneously from chanoclavine-I aldehyde in the presence of glutathione. The presence of easA is not required to complete this reaction. Further conversion of agroclavine to paspalic acid is a two-step process involving oxidation of agroclavine to elymoclavine and of elymoclavine to paspalic acid, the second step being performed by the elymoclavine oxidase cloA. Paspalic acid is then further converted to D-lysergic acid. Ergopeptines are assembled from D-lysergic acid and three different amino acids by the D-lysergyl-peptide-synthetases composed each of a monomudular and a trimodular nonribosomal peptide synthetase subunit. LpsB and lpsC encode the monomodular subunits responsible for D-lysergic acid activation and incorporation into the ergopeptine backbone. LpsA1 and A2 subunits encode the trimodular nonribosomal peptide synthetase assembling the tripeptide portion of ergopeptines. LpsA1 is responsible for formation of the major ergopeptine, ergotamine, and lpsA2 for alpha-ergocryptine, the minor ergopeptine of the total alkaloid mixture elaborated by C.purpurea. D-lysergyl-tripeptides are assembled by the nonribosomal peptide synthetases and released as N-(D-lysergyl-aminoacyl)-lactams. Cyclolization of the D-lysergyl-tripeptides is performed by the Fe(2+)/2-ketoglutarate-dependent dioxygenase easH which introduces a hydroxyl group into N-(D-lysergyl-aminoacyl)-lactam at alpha-C of the aminoacyl residue followed by spontaneous condensation with the terminal lactam carbonyl group. This chain is Probable inactive dehydrogenase easA, found in Claviceps purpurea (Ergot fungus).